Consider the following 447-residue polypeptide: GTPase Der (447 aa).

EngA-type G domains follow at residues 3-167 (PVIA…ALPE) and 180-353 (IRLA…KSAN). GTP is bound by residues 9–16 (GRPNVGKS), 56–60 (DTGGF), 119–122 (NKAE), 186–193 (GRPNVGKS), 233–237 (DTAGL), and 298–301 (NKWD). In terms of domain architecture, KH-like spans 354–438 (RKMPTPVLTR…PLRIEMKTSS (85 aa)).

It belongs to the TRAFAC class TrmE-Era-EngA-EngB-Septin-like GTPase superfamily. EngA (Der) GTPase family. Associates with the 50S ribosomal subunit.

GTPase that plays an essential role in the late steps of ribosome biogenesis. The sequence is that of GTPase Der from Acidovorax sp. (strain JS42).